The sequence spans 310 residues: Protein-L-isoaspartate O-methyltransferase (310 aa).

2 disordered regions span residues 1–44 and 67–88; these read MSGE…DKPA and AKPATAPKPTAPKPALPKPAAP. The span at 14–29 shows a compositional bias: basic and acidic residues; the sequence is EDLKRAPRKSEGRPGE. Over residues 32–44 the composition is skewed to low complexity; the sequence is AAGAVPKAADKPA. The span at 75 to 86 shows a compositional bias: pro residues; it reads PTAPKPALPKPA. S157 is a catalytic residue.

The protein belongs to the methyltransferase superfamily. L-isoaspartyl/D-aspartyl protein methyltransferase family.

Its subcellular location is the cytoplasm. The catalysed reaction is [protein]-L-isoaspartate + S-adenosyl-L-methionine = [protein]-L-isoaspartate alpha-methyl ester + S-adenosyl-L-homocysteine. Functionally, catalyzes the methyl esterification of L-isoaspartyl residues in peptides and proteins that result from spontaneous decomposition of normal L-aspartyl and L-asparaginyl residues. It plays a role in the repair and/or degradation of damaged proteins. This chain is Protein-L-isoaspartate O-methyltransferase, found in Burkholderia orbicola (strain MC0-3).